The chain runs to 666 residues: Protein-arginine deiminase type-4 (666 aa).

Ca(2+)-binding residues include N153, D155, D165, D168, D176, and D179. 2 positions are modified to citrulline: R212 and R218. Q349 serves as a coordination point for Ca(2+). D350 is an active-site residue. E351, E353, D369, and S370 together coordinate Ca(2+). R372, R374, and R383 each carry citrulline. R374 is a substrate binding site. Residues F407, L410, and E411 each contribute to the Ca(2+) site. Residues H471, D473, and C648 contribute to the active site.

The protein belongs to the protein arginine deiminase family. The cofactor is Ca(2+). In terms of processing, autocitrullination at Arg-372 and Arg-374 inactivates the enzyme. In terms of tissue distribution, expressed in pluripotent embryonic stem and induced pluripotent stem cells but not multipotent neural stem cells.

It is found in the cytoplasm. The protein localises to the nucleus. Its subcellular location is the cytoplasmic granule. The enzyme catalyses L-arginyl-[protein] + H2O = L-citrullyl-[protein] + NH4(+). With respect to regulation, strongly Inhibited by F-amidine and N-alpha-benzoyl-N5-(2-chloro-1-iminoethyl)-L-ornithine amide (Cl-amidine). These inhibitors are however not specific to PADI4 and also inhibit other members of the family. In terms of biological role, catalyzes the citrullination/deimination of arginine residues of proteins such as histones, thereby playing a key role in histone code and regulation of stem cell maintenance. Citrullinates histone H1 at 'Arg-54' (to form H1R54ci), histone H3 at 'Arg-2', 'Arg-8', 'Arg-17' and/or 'Arg-26' (to form H3R2ci, H3R8ci, H3R17ci, H3R26ci, respectively) and histone H4 at 'Arg-3' (to form H4R3ci). Acts as a key regulator of stem cell maintenance by mediating citrullination of histone H1: citrullination of 'Arg-54' of histone H1 (H1R54ci) results in H1 displacement from chromatin and global chromatin decondensation, thereby promoting pluripotency and stem cell maintenance. Promotes profound chromatin decondensation during the innate immune response to infection in neutrophils by mediating formation of H1R54ci. Required for the formation of neutrophil extracellular traps (NETs); NETs are mainly composed of DNA fibers and are released by neutrophils to bind pathogens during inflammation. Citrullination of histone H3 prevents their methylation by CARM1 and HRMT1L2/PRMT1 and represses transcription. Citrullinates EP300/P300 at 'Arg-2142', which favors its interaction with NCOA2/GRIP1. The protein is Protein-arginine deiminase type-4 (Padi4) of Mus musculus (Mouse).